The following is an 835-amino-acid chain: Leucine--tRNA ligase (835 aa).

The short motif at 36 to 46 (PYPSGKIHVGH) is the 'HIGH' region element. The short motif at 602–606 (KMSKS) is the 'KMSKS' region element. K605 serves as a coordination point for ATP.

The protein belongs to the class-I aminoacyl-tRNA synthetase family.

It localises to the cytoplasm. The catalysed reaction is tRNA(Leu) + L-leucine + ATP = L-leucyl-tRNA(Leu) + AMP + diphosphate. The sequence is that of Leucine--tRNA ligase from Rickettsia rickettsii (strain Iowa).